The chain runs to 100 residues: MKLSCLSLALAIILVLAIVYSPHMEVKALADAEPDAIGFADAFGEADAEPKRRRGLKKIIGKVIKGTGKVAGEAAASAVADAAVSAAIDAVVGTTEEPEQ.

The N-terminal stretch at 1-17 (MKLSCLSLALAIILVLA) is a signal peptide. Residues 18 to 50 (IVYSPHMEVKALADAEPDAIGFADAFGEADAEP) constitute a propeptide that is removed on maturation. Ser85 is a glycosylation site (O-linked (GalNAc...) serine). Residues Thr94 and Thr95 are each glycosylated (O-linked (GalNAc...) threonine).

The protein belongs to the formicidae venom precursor-01 superfamily. Glycosylation is critical to maintaining the aqueous solubility of this protein, but does not directly contribute to its activity. As to expression, expressed by the venom gland.

Its subcellular location is the secreted. It is found in the target cell membrane. Its function is as follows. Neurotoxin that triggers pain behavior and inflammation in mammals, and is paralytic and lethal to insects. Causes a time-dependent increase in cell leak current. May act by targeting membranes. The sequence is that of U-myrmeciitoxin(01)-Mg7b from Myrmecia gulosa (Red bulldog ant).